The primary structure comprises 704 residues: RCC1 domain-containing protein DDB_G0295713 (704 aa).

RCC1 repeat units follow at residues 1-48 and 69-120; these read MYCW…VKGE and KNRC…ITDQ. Positions 221 to 246 are disordered; the sequence is YNNNNNNNNNNNNNNNNNNNNNNNNN. The segment covering 222 to 246 has biased composition (low complexity); that stretch reads NNNNNNNNNNNNNNNNNNNNNNNNN. The stretch at 298–348 is one RCC1 3 repeat; the sequence is QNQVYGWGENLNGQLGIEGIDYSTEPILIELPLVEIKHISSGAYHSAFVTN. Positions 412–431 are enriched in basic and acidic residues; that stretch reads IKDKNENNETKHTNKNKDNH. Positions 412-458 are disordered; sequence IKDKNENNETKHTNKNKDNHDDDDESDHSDDDHHDDDDNDKDSQGIN. A compositionally biased stretch (acidic residues) spans 432 to 451; that stretch reads DDDDESDHSDDDHHDDDDND. Positions 668-698 form a coiled coil; the sequence is IEQTSTQVANSENENENEIEMKMKMKKNEMK.

The polypeptide is RCC1 domain-containing protein DDB_G0295713 (Dictyostelium discoideum (Social amoeba)).